Here is a 470-residue protein sequence, read N- to C-terminus: Histidine--tRNA ligase (470 aa).

The protein belongs to the class-II aminoacyl-tRNA synthetase family. Homodimer.

The protein resides in the cytoplasm. It carries out the reaction tRNA(His) + L-histidine + ATP = L-histidyl-tRNA(His) + AMP + diphosphate + H(+). The chain is Histidine--tRNA ligase from Xanthomonas oryzae pv. oryzae (strain PXO99A).